We begin with the raw amino-acid sequence, 161 residues long: Allophycocyanin alpha chain 2 (161 aa).

Asn-71 carries the post-translational modification N4-methylasparagine. Cys-81 is a binding site for (2R,3E)-phycocyanobilin.

This sequence belongs to the phycobiliprotein family. As to quaternary structure, component of the phycobilisome. Heterodimer of an alpha and a beta chain. In terms of processing, contains one covalently linked bilin chromophore.

The protein localises to the cellular thylakoid membrane. Functionally, light-harvesting photosynthetic bile pigment-protein from the phycobiliprotein complex. Allophycocyanin has a maximum absorption at approximately 650 nanometers. The protein is Allophycocyanin alpha chain 2 (apcA2) of Microchaete diplosiphon (Fremyella diplosiphon).